The following is a 260-amino-acid chain: MKIKDYAVDTARAVAFLSRLPMPPALFNGYDGRLGRLVRAFPFAGLLIGFVPAFALLLLLGLRADPLVAALVALAVQALVTGALHEDGLADTADGIGGGKSREQSLIIMKDSRIGTYGAIALILSFAIRAAALAAIVRHSSPLAAVLAIPAVAALSRGAITWHWQRLPPAKADGVAASTGQPDEAAMHFALVAAGLLAALLIWPAFGLWPLVASLLAAGAAGFVCTVFIRRRLAGHTGDTLGATQQICEIATLCALATAL.

6 helical membrane-spanning segments follow: residues 40–60, 64–84, 117–137, 142–162, 189–209, and 210–230; these read AFPF…LLLL, ADPL…TGAL, YGAI…AAIV, PLAA…AITW, FALV…FGLW, and PLVA…VFIR.

This sequence belongs to the CobS family. It depends on Mg(2+) as a cofactor.

It localises to the cell inner membrane. It carries out the reaction alpha-ribazole + adenosylcob(III)inamide-GDP = adenosylcob(III)alamin + GMP + H(+). It catalyses the reaction alpha-ribazole 5'-phosphate + adenosylcob(III)inamide-GDP = adenosylcob(III)alamin 5'-phosphate + GMP + H(+). It functions in the pathway cofactor biosynthesis; adenosylcobalamin biosynthesis; adenosylcobalamin from cob(II)yrinate a,c-diamide: step 7/7. Its function is as follows. Joins adenosylcobinamide-GDP and alpha-ribazole to generate adenosylcobalamin (Ado-cobalamin). Also synthesizes adenosylcobalamin 5'-phosphate from adenosylcobinamide-GDP and alpha-ribazole 5'-phosphate. This Rhizobium etli (strain CIAT 652) protein is Adenosylcobinamide-GDP ribazoletransferase.